A 108-amino-acid polypeptide reads, in one-letter code: Large ribosomal subunit protein eL33A (108 aa).

The protein belongs to the eukaryotic ribosomal protein eL33 family. Component of the large ribosomal subunit (LSU). Mature yeast ribosomes consist of a small (40S) and a large (60S) subunit. The 40S small subunit contains 1 molecule of ribosomal RNA (18S rRNA) and at least 33 different proteins. The large 60S subunit contains 3 rRNA molecules (25S, 5.8S and 5S rRNA) and at least 46 different proteins.

The protein localises to the cytoplasm. It localises to the nucleus. It is found in the nucleolus. In terms of biological role, component of the ribosome, a large ribonucleoprotein complex responsible for the synthesis of proteins in the cell. The small ribosomal subunit (SSU) binds messenger RNAs (mRNAs) and translates the encoded message by selecting cognate aminoacyl-transfer RNA (tRNA) molecules. The large subunit (LSU) contains the ribosomal catalytic site termed the peptidyl transferase center (PTC), which catalyzes the formation of peptide bonds, thereby polymerizing the amino acids delivered by tRNAs into a polypeptide chain. The nascent polypeptides leave the ribosome through a tunnel in the LSU and interact with protein factors that function in enzymatic processing, targeting, and the membrane insertion of nascent chains at the exit of the ribosomal tunnel. In Schizosaccharomyces pombe (strain 972 / ATCC 24843) (Fission yeast), this protein is Large ribosomal subunit protein eL33A (rpl35b).